The following is a 131-amino-acid chain: UPF0102 protein RALTA_A3032 (131 aa).

The segment covering 1–12 has biased composition (polar residues); the sequence is MMRSFKSTQEPS. A disordered region spans residues 1-21; it reads MMRSFKSTQEPSRQARGAQAE.

The protein belongs to the UPF0102 family.

In Cupriavidus taiwanensis (strain DSM 17343 / BCRC 17206 / CCUG 44338 / CIP 107171 / LMG 19424 / R1) (Ralstonia taiwanensis (strain LMG 19424)), this protein is UPF0102 protein RALTA_A3032.